A 160-amino-acid polypeptide reads, in one-letter code: SsrA-binding protein (160 aa).

This sequence belongs to the SmpB family.

The protein localises to the cytoplasm. Functionally, required for rescue of stalled ribosomes mediated by trans-translation. Binds to transfer-messenger RNA (tmRNA), required for stable association of tmRNA with ribosomes. tmRNA and SmpB together mimic tRNA shape, replacing the anticodon stem-loop with SmpB. tmRNA is encoded by the ssrA gene; the 2 termini fold to resemble tRNA(Ala) and it encodes a 'tag peptide', a short internal open reading frame. During trans-translation Ala-aminoacylated tmRNA acts like a tRNA, entering the A-site of stalled ribosomes, displacing the stalled mRNA. The ribosome then switches to translate the ORF on the tmRNA; the nascent peptide is terminated with the 'tag peptide' encoded by the tmRNA and targeted for degradation. The ribosome is freed to recommence translation, which seems to be the essential function of trans-translation. The protein is SsrA-binding protein of Nocardia farcinica (strain IFM 10152).